The sequence spans 182 residues: NADH-quinone oxidoreductase subunit I (182 aa).

2 consecutive 4Fe-4S ferredoxin-type domains span residues 52–82 and 92–121; these read LTRD…LQKA and DFFR…LTPD. [4Fe-4S] cluster contacts are provided by C62, C65, C68, C72, C101, C104, C107, and C111.

This sequence belongs to the complex I 23 kDa subunit family. As to quaternary structure, NDH-1 is composed of 13 different subunits. Subunits NuoA, H, J, K, L, M, N constitute the membrane sector of the complex. It depends on [4Fe-4S] cluster as a cofactor.

Its subcellular location is the cell inner membrane. The enzyme catalyses a quinone + NADH + 5 H(+)(in) = a quinol + NAD(+) + 4 H(+)(out). In terms of biological role, NDH-1 shuttles electrons from NADH, via FMN and iron-sulfur (Fe-S) centers, to quinones in the respiratory chain. The immediate electron acceptor for the enzyme in this species is believed to be ubiquinone. Couples the redox reaction to proton translocation (for every two electrons transferred, four hydrogen ions are translocated across the cytoplasmic membrane), and thus conserves the redox energy in a proton gradient. The sequence is that of NADH-quinone oxidoreductase subunit I from Pseudomonas fluorescens (strain Pf0-1).